Here is a 59-residue protein sequence, read N- to C-terminus: MAVQKNKPTRSKRGMRRSHDKINIHKFSVDKVSGEIHIRHCLTKSGFYCGKKVLNKKNK.

The interval 1–20 is disordered; the sequence is MAVQKNKPTRSKRGMRRSHD. The segment covering 7–19 has biased composition (basic residues); the sequence is KPTRSKRGMRRSH.

This sequence belongs to the bacterial ribosomal protein bL32 family.

This chain is Large ribosomal subunit protein bL32, found in Wigglesworthia glossinidia brevipalpis.